The chain runs to 227 residues: Agamous-like MADS-box protein AGL8 homolog (227 aa).

The MADS-box domain occupies 3-57; sequence RGRVQLKRIENKINRQVTFSKRRSGLLKKAHEISVLCDAEVGLIVFSTKGKLFEY. Positions 88–178 constitute a K-box domain; that stretch reads PVSWTLEHRK…SKKVKEREKS (91 aa).

As to expression, flower specific.

It localises to the nucleus. In terms of biological role, probable transcription factor. The polypeptide is Agamous-like MADS-box protein AGL8 homolog (TDR4) (Solanum lycopersicum (Tomato)).